Reading from the N-terminus, the 294-residue chain is Phosphatidylinositol transfer protein SFH5 (294 aa).

The CRAL-TRIO domain maps to 100 to 266 (HNTELQNVGI…GYGGKDKKNN (167 aa)). The heme site is built by Y128, R148, H173, Y175, and K209.

It belongs to the SFH5 family. It depends on heme b as a cofactor.

Its subcellular location is the cytoplasm. The protein localises to the endoplasmic reticulum membrane. The protein resides in the microsome membrane. The enzyme catalyses a 1,2-diacyl-sn-glycero-3-phospho-(1D-myo-inositol)(in) = a 1,2-diacyl-sn-glycero-3-phospho-(1D-myo-inositol)(out). Functionally, non-classical phosphatidylinositol (PtdIns) transfer protein (PITP), which exhibits PtdIns-binding/transfer activity in the absence of detectable PtdCho-binding/transfer activity. Regulates PtdIns(4,5)P2 homeostasis at the plasma membrane. Heme-binding protein that may play a role in organic oxidant-induced stress responses. This Saccharomyces cerevisiae (strain YJM789) (Baker's yeast) protein is Phosphatidylinositol transfer protein SFH5 (SFH5).